The primary structure comprises 618 residues: MATIPDWKLQLLARRRQEEAAVRGREKAERERLSQMPAWKRGLLERRRAKLGLSPGEPSPAPGTTEAGPPDPDKSAVLLEAIGPVHQNRFIRQERQQQQQQQQQQQQQQRSEELLAERRPGLLEAREWRSSPGEMRDQSPKERESREERLSPREARERRLGIGGARESSPRPLESRDWRQSPGEAGDRSSRLSEVRKWRLSPGETPERSLRPAEPQEQSPRRKEVVESRLSPADSDHEKLGLTDAHKRRPDSGESQEQSLVLEASEWRLSSGEERKDCLEECGRKEERTLPGMVPEDITGSPETLTMEAAGSSSGGVEAADQRPIPVEDGERDLRLSEGWKWTLNSGKVRDRTPRDTETQSQKPESAEKHLGPLGAEAGEGEAEKEEAGAQGRPLSALQNRCSVPSPLPPEDAGTGGSRQQEEEAGELRPPPAAPLSPPPPAPPAPQPPGDPLMSRLFYGVKAGPGVGAPRRSGHTFTVNPRRSAPPAAAATPATPATADAAVPGAGKKRYPTAEEILVLGGYLRLSRSCLAKGSPERHHKQLKISFSETALETTYQYPSESSVLEELGPEPEAPSAPSPPAAQPDDEEDEEELLLLQRELQGGLRTKALIVDESCRR.

Residues 15–33 show a composition bias toward basic and acidic residues; it reads RRQEEAAVRGREKAERERL. The segment at 15-505 is disordered; it reads RRQEEAAVRG…PATADAAVPG (491 aa). Ser54 carries the phosphoserine modification. A compositionally biased stretch (low complexity) spans 96–109; the sequence is QQQQQQQQQQQQQQ. Composition is skewed to basic and acidic residues over residues 110–160 and 173–197; these read RSEE…ERRL and LESRDWRQSPGEAGDRSSRLSEVRK. A phosphoserine mark is found at Ser131, Ser139, Ser181, and Ser201. Residue Thr205 is modified to Phosphothreonine. A Phosphoserine modification is found at Ser231. Composition is skewed to basic and acidic residues over residues 234–245 and 271–289; these read DSDHEKLGLTDA and SGEERKDCLEECGRKEERT. Positions 308 to 319 are enriched in low complexity; the sequence is EAAGSSSGGVEA. Basic and acidic residues predominate over residues 348-358; it reads KVRDRTPRDTE. The segment covering 429–451 has biased composition (pro residues); it reads RPPPAAPLSPPPPAPPAPQPPGD. The residue at position 437 (Ser437) is a Phosphoserine. Lys462 bears the N6-acetyllysine mark. Residues 485–505 show a composition bias toward low complexity; the sequence is APPAAAATPATPATADAAVPG. Ser535 carries the post-translational modification Phosphoserine. The interval 556–594 is disordered; it reads YQYPSESSVLEELGPEPEAPSAPSPPAAQPDDEEDEEEL. The span at 572-583 shows a compositional bias: pro residues; the sequence is PEAPSAPSPPAA. Positions 585-594 are enriched in acidic residues; it reads PDDEEDEEEL.

As to quaternary structure, interacts with Protein phosphatase 1 (PP1).

Its subcellular location is the cytoplasm. The protein localises to the cytoskeleton. Functionally, may target protein phosphatase 1 to F-actin cytoskeleton. This is Phostensin (PPP1R18) from Sus scrofa (Pig).